The primary structure comprises 40 residues: Cell division inhibitor MciZ (40 aa).

In terms of assembly, interacts with FtsZ. Binds to the C-terminal polymerization interface of FtsZ. Binds to FtsZ filaments.

With respect to regulation, highly effective in inhibiting polymerization at low and intermediate concentrations of GTP and only partially effective at high GTP concentrations. In terms of biological role, blocks Z-ring formation in the mother cell during sporulation by inhibiting the polymerization of FtsZ. Binds to the minus end of FtsZ and functions as a filament-capping protein. At high concentrations, is capable of both capping and sequestration of FtsZ. Decreases the GTPase activity of FtsZ. The sequence is that of Cell division inhibitor MciZ from Bacillus subtilis (strain 168).